The primary structure comprises 321 residues: MIKLLYPEFWQKRNIIAYLLLPISLIYQFLGYLRASLARPIMLPAKVICVGNCSVGGTGKTQIVMYLAKLLKARNVSFVIVTKAYGSNLKSATTIHQGHTALEVGDEGVILAKYGAVIATKNIKEIVPLINELKPDIIIVDDFLQNPYFHKDFTIVSVDSQRLFGNGFLIPAGPLRQYPNKALDAADLIFLVSSHQDKIPKILTPYVNKLINAQIVPSHNIDKTKNYFAFSGIGNPERFFATLKNYGLNITGYKIFPDHYNYLQADLENLYSLAKEHNATLVTTRKDHVKFNDLNNNIVCLDVELSINHPDLLNEKIFKKA.

54–61 (SVGGTGKT) provides a ligand contact to ATP.

The protein belongs to the LpxK family.

The catalysed reaction is a lipid A disaccharide + ATP = a lipid IVA + ADP + H(+). It participates in glycolipid biosynthesis; lipid IV(A) biosynthesis; lipid IV(A) from (3R)-3-hydroxytetradecanoyl-[acyl-carrier-protein] and UDP-N-acetyl-alpha-D-glucosamine: step 6/6. Functionally, transfers the gamma-phosphate of ATP to the 4'-position of a tetraacyldisaccharide 1-phosphate intermediate (termed DS-1-P) to form tetraacyldisaccharide 1,4'-bis-phosphate (lipid IVA). In Rickettsia peacockii (strain Rustic), this protein is Tetraacyldisaccharide 4'-kinase.